We begin with the raw amino-acid sequence, 664 residues long: Probable LRR receptor-like serine/threonine-protein kinase At1g63430 (664 aa).

The N-terminal stretch at 1 to 22 is a signal peptide; sequence MRSKYFCSLALVLGLFFVSCDG. Residues 23 to 288 are Extracellular-facing; sequence FASNEVQALR…KHHRASKPKW (266 aa). N-linked (GlcNAc...) asparagine glycosylation occurs at N75. 4 LRR repeats span residues 94–116, 118–140, 142–165, and 166–178; these read YLQELILHGNILIGTIPKEIGNL, NLKILDLGNNHLMGPIPAEIGSL, GIMIINLQSNGLTGKLPAELGNLK, and YLRELHIDRNRLQ. A glycan (N-linked (GlcNAc...) asparagine) is linked at N197. Residues 289–309 traverse the membrane as a helical segment; the sequence is LLALEIVTGSMVGLLLLVALF. Residues 310–664 are Cytoplasmic-facing; the sequence is SAVHRWNNRS…LAWAELALDS (355 aa). One can recognise a Protein kinase domain in the interval 360 to 642; it reads EDFSNIIGLS…ELCETLESRI (283 aa).

Belongs to the protein kinase superfamily. Ser/Thr protein kinase family.

It localises to the cell membrane. The enzyme catalyses L-seryl-[protein] + ATP = O-phospho-L-seryl-[protein] + ADP + H(+). The catalysed reaction is L-threonyl-[protein] + ATP = O-phospho-L-threonyl-[protein] + ADP + H(+). This chain is Probable LRR receptor-like serine/threonine-protein kinase At1g63430, found in Arabidopsis thaliana (Mouse-ear cress).